The primary structure comprises 344 residues: N-acetyl-gamma-glutamyl-phosphate reductase (344 aa).

Residue Cys149 is part of the active site.

It belongs to the NAGSA dehydrogenase family. Type 1 subfamily.

The protein localises to the cytoplasm. The enzyme catalyses N-acetyl-L-glutamate 5-semialdehyde + phosphate + NADP(+) = N-acetyl-L-glutamyl 5-phosphate + NADPH + H(+). It functions in the pathway amino-acid biosynthesis; L-arginine biosynthesis; N(2)-acetyl-L-ornithine from L-glutamate: step 3/4. Its function is as follows. Catalyzes the NADPH-dependent reduction of N-acetyl-5-glutamyl phosphate to yield N-acetyl-L-glutamate 5-semialdehyde. The chain is N-acetyl-gamma-glutamyl-phosphate reductase from Thermoanaerobacter pseudethanolicus (strain ATCC 33223 / 39E) (Clostridium thermohydrosulfuricum).